We begin with the raw amino-acid sequence, 130 residues long: Small ribosomal subunit protein uS8 (130 aa).

Belongs to the universal ribosomal protein uS8 family. Part of the 30S ribosomal subunit.

One of the primary rRNA binding proteins, it binds directly to 16S rRNA central domain where it helps coordinate assembly of the platform of the 30S subunit. The protein is Small ribosomal subunit protein uS8 of Pyrobaculum calidifontis (strain DSM 21063 / JCM 11548 / VA1).